The primary structure comprises 257 residues: Homeobox protein goosecoid (257 aa).

Positions 160-219 (KRRHRTIFTDEQLEALENLFQETKYPDVGTREQLARKVHLREEKVEVWFKNRRAKWRRQK) form a DNA-binding region, homeobox. The tract at residues 213–257 (AKWRRQKRSSSEESENAEKWNKTSSSKASPEKREEEGKSDLDSDS) is disordered. The span at 241–257 (SPEKREEEGKSDLDSDS) shows a compositional bias: basic and acidic residues.

Belongs to the paired homeobox family. Bicoid subfamily.

It is found in the nucleus. Regulates chordin (CHRD). May play a role in spatial programing within discrete embryonic fields or lineage compartments during organogenesis. In concert with NKX3-2, plays a role in defining the structural components of the middle ear; required for the development of the entire tympanic ring. Probably involved in the regulatory networks that define neural crest cell fate specification and determine mesoderm cell lineages in mammals. This Pongo pygmaeus (Bornean orangutan) protein is Homeobox protein goosecoid (GSC).